The sequence spans 191 residues: uncharacterized protein (191 aa).

The protein to E.coli YecM.

This is an uncharacterized protein from Haemophilus influenzae (strain ATCC 51907 / DSM 11121 / KW20 / Rd).